Consider the following 580-residue polypeptide: DNA ligase B (580 aa).

Residue lysine 135 is the N6-AMP-lysine intermediate of the active site.

It belongs to the NAD-dependent DNA ligase family. LigB subfamily.

It catalyses the reaction NAD(+) + (deoxyribonucleotide)n-3'-hydroxyl + 5'-phospho-(deoxyribonucleotide)m = (deoxyribonucleotide)n+m + AMP + beta-nicotinamide D-nucleotide.. In terms of biological role, catalyzes the formation of phosphodiester linkages between 5'-phosphoryl and 3'-hydroxyl groups in double-stranded DNA using NAD as a coenzyme and as the energy source for the reaction. The polypeptide is DNA ligase B (Photorhabdus laumondii subsp. laumondii (strain DSM 15139 / CIP 105565 / TT01) (Photorhabdus luminescens subsp. laumondii)).